The sequence spans 367 residues: NADH-quinone oxidoreductase subunit D (367 aa).

It belongs to the complex I 49 kDa subunit family. NDH-1 is composed of 14 different subunits. Subunits NuoB, C, D, E, F, and G constitute the peripheral sector of the complex.

Its subcellular location is the cell membrane. The enzyme catalyses a quinone + NADH + 5 H(+)(in) = a quinol + NAD(+) + 4 H(+)(out). NDH-1 shuttles electrons from NADH, via FMN and iron-sulfur (Fe-S) centers, to quinones in the respiratory chain. The immediate electron acceptor for the enzyme in this species is believed to be a menaquinone. Couples the redox reaction to proton translocation (for every two electrons transferred, four hydrogen ions are translocated across the cytoplasmic membrane), and thus conserves the redox energy in a proton gradient. The polypeptide is NADH-quinone oxidoreductase subunit D (Geobacillus kaustophilus (strain HTA426)).